The chain runs to 428 residues: BTB/POZ domain-containing protein KCTD16 (428 aa).

Residues 25–98 (EVVELNVGGQ…LRDRQVVLPD (74 aa)) enclose the BTB domain. Y112 is subject to Phosphotyrosine. 4 positions are modified to phosphoserine: S130, S137, S143, and S146.

Homopentamer; forms an open pentamer. In contrast to other BTB domain-containing proteins, does not interact with CUL3. Interacts as a tetramer with GABRB1 and GABRB2.

Its subcellular location is the presynaptic cell membrane. The protein resides in the postsynaptic cell membrane. Its function is as follows. Auxiliary subunit of GABA-B receptors that determine the pharmacology and kinetics of the receptor response. Increases agonist potency and markedly alter the G-protein signaling of the receptors by accelerating onset and promoting desensitization. In Homo sapiens (Human), this protein is BTB/POZ domain-containing protein KCTD16 (KCTD16).